We begin with the raw amino-acid sequence, 73 residues long: Translation initiation factor IF-1 (73 aa).

Residues 1 to 73 form the S1-like domain; that stretch reads MAKKEDTIVL…TKARVVYRHR (73 aa).

The protein belongs to the IF-1 family. In terms of assembly, component of the 30S ribosomal translation pre-initiation complex which assembles on the 30S ribosome in the order IF-2 and IF-3, IF-1 and N-formylmethionyl-tRNA(fMet); mRNA recruitment can occur at any time during PIC assembly.

It localises to the cytoplasm. One of the essential components for the initiation of protein synthesis. Stabilizes the binding of IF-2 and IF-3 on the 30S subunit to which N-formylmethionyl-tRNA(fMet) subsequently binds. Helps modulate mRNA selection, yielding the 30S pre-initiation complex (PIC). Upon addition of the 50S ribosomal subunit IF-1, IF-2 and IF-3 are released leaving the mature 70S translation initiation complex. The sequence is that of Translation initiation factor IF-1 from Chlamydia abortus (strain DSM 27085 / S26/3) (Chlamydophila abortus).